Here is a 209-residue protein sequence, read N- to C-terminus: Uracil phosphoribosyltransferase (209 aa).

Residues arginine 79, arginine 104, and 131-139 (DPMLATGNS) each bind 5-phospho-alpha-D-ribose 1-diphosphate. Uracil contacts are provided by residues isoleucine 194 and 199–201 (GDA). Residue aspartate 200 participates in 5-phospho-alpha-D-ribose 1-diphosphate binding.

Belongs to the UPRTase family. Requires Mg(2+) as cofactor.

The enzyme catalyses UMP + diphosphate = 5-phospho-alpha-D-ribose 1-diphosphate + uracil. Its pathway is pyrimidine metabolism; UMP biosynthesis via salvage pathway; UMP from uracil: step 1/1. Allosterically activated by GTP. Its function is as follows. Catalyzes the conversion of uracil and 5-phospho-alpha-D-ribose 1-diphosphate (PRPP) to UMP and diphosphate. This Rhizobium meliloti (strain 1021) (Ensifer meliloti) protein is Uracil phosphoribosyltransferase.